The primary structure comprises 138 residues: Basic phospholipase A2 homolog Tbo-K49 (138 aa).

The first 16 residues, 1–16 (MRTLWIMAVLLVGVEG), serve as a signal peptide directing secretion. Disulfide bonds link C42/C131, C44/C60, C59/C111, C65/C138, C66/C104, and C91/C102. The interval 121-133 (KKERINTKIFCKK) is important for membrane-damaging activities in eukaryotes and bacteria; heparin-binding.

In terms of assembly, monomer. Expressed by the venom gland.

It localises to the secreted. In terms of biological role, snake venom phospholipase A2 homolog that lacks catalytic activity. It induces local edema. Is myotoxic. A model of myotoxic mechanism has been proposed: an apo Lys49-PLA2 is activated by the entrance of a hydrophobic molecule (e.g. fatty acid) at the hydrophobic channel of the protein leading to a reorientation of a monomer. This reorientation causes a transition between 'inactive' to 'active' states, causing alignment of C-terminal and membrane-docking sites (MDoS) side-by-side and putting the membrane-disruption sites (MDiS) in the same plane, exposed to solvent and in a symmetric position for both monomers. The MDoS region stabilizes the toxin on membrane by the interaction of charged residues with phospholipid head groups. Subsequently, the MDiS region destabilizes the membrane with penetration of hydrophobic residues. This insertion causes a disorganization of the membrane, allowing an uncontrolled influx of ions (i.e. calcium and sodium), and eventually triggering irreversible intracellular alterations and cell death. This is Basic phospholipase A2 homolog Tbo-K49 from Craspedocephalus borneensis (Borneo pit viper).